We begin with the raw amino-acid sequence, 408 residues long: Bifunctional enzyme IspD/IspF (408 aa).

Positions methionine 1–isoleucine 247 are 2-C-methyl-D-erythritol 4-phosphate cytidylyltransferase. The 2-C-methyl-D-erythritol 2,4-cyclodiphosphate synthase stretch occupies residues arginine 248–asparagine 408. Residues aspartate 254 and histidine 256 each contribute to the a divalent metal cation site. Residues aspartate 254 to histidine 256 and histidine 280 to serine 281 each bind 4-CDP-2-C-methyl-D-erythritol 2-phosphate. Histidine 288 serves as a coordination point for a divalent metal cation. 4-CDP-2-C-methyl-D-erythritol 2-phosphate contacts are provided by residues aspartate 302–glycine 304, threonine 378–glutamate 381, phenylalanine 385, and arginine 388.

It in the N-terminal section; belongs to the IspD/TarI cytidylyltransferase family. IspD subfamily. In the C-terminal section; belongs to the IspF family. The cofactor is a divalent metal cation.

The enzyme catalyses 2-C-methyl-D-erythritol 4-phosphate + CTP + H(+) = 4-CDP-2-C-methyl-D-erythritol + diphosphate. It catalyses the reaction 4-CDP-2-C-methyl-D-erythritol 2-phosphate = 2-C-methyl-D-erythritol 2,4-cyclic diphosphate + CMP. Its pathway is isoprenoid biosynthesis; isopentenyl diphosphate biosynthesis via DXP pathway; isopentenyl diphosphate from 1-deoxy-D-xylulose 5-phosphate: step 2/6. It functions in the pathway isoprenoid biosynthesis; isopentenyl diphosphate biosynthesis via DXP pathway; isopentenyl diphosphate from 1-deoxy-D-xylulose 5-phosphate: step 4/6. In terms of biological role, bifunctional enzyme that catalyzes the formation of 4-diphosphocytidyl-2-C-methyl-D-erythritol from CTP and 2-C-methyl-D-erythritol 4-phosphate (MEP) (IspD), and catalyzes the conversion of 4-diphosphocytidyl-2-C-methyl-D-erythritol 2-phosphate (CDP-ME2P) to 2-C-methyl-D-erythritol 2,4-cyclodiphosphate (ME-CPP) with a corresponding release of cytidine 5-monophosphate (CMP) (IspF). In Chelativorans sp. (strain BNC1), this protein is Bifunctional enzyme IspD/IspF.